Reading from the N-terminus, the 349-residue chain is MELLESALAKIQPVDEALLAQAQAKLDNKTKPPGSLGLLEEMARRFAAITGDLSPKMGKKVVFTFAGDHGIVEEGVSLYPKEVTPQMVLNFLRGGAGVNVLARHAGAEVRVVDVGVDYDFEPTEGLIIRKIAKGTRNFAKESAMTREEAVAAIEVGIALADRAKAEGISMVGTGEMGIGNTSPSSAIIAAFAGCSVREVTHRGTGIGDQALEHKIKVIQAGLDLNRPNPEDPLDVLAKVGGLEIAGIAGLVLGAAANRIPVVVDGFISTAGALIACELHPNVREYIFAAHNSVEIGHQMMLQRIGAKPILDLQLRLGEGTGAALAMGLIEASVKVLNEMATFEEAGVTS.

Residue E318 is the Proton acceptor of the active site.

It belongs to the CobT family.

The enzyme catalyses 5,6-dimethylbenzimidazole + nicotinate beta-D-ribonucleotide = alpha-ribazole 5'-phosphate + nicotinate + H(+). It participates in nucleoside biosynthesis; alpha-ribazole biosynthesis; alpha-ribazole from 5,6-dimethylbenzimidazole: step 1/2. Catalyzes the synthesis of alpha-ribazole-5'-phosphate from nicotinate mononucleotide (NAMN) and 5,6-dimethylbenzimidazole (DMB). This is Nicotinate-nucleotide--dimethylbenzimidazole phosphoribosyltransferase from Geobacter sp. (strain M21).